A 307-amino-acid polypeptide reads, in one-letter code: Malate dehydrogenase (307 aa).

Residues 8-13 (GAGNVG) and aspartate 32 contribute to the NAD(+) site. Residues arginine 81 and arginine 87 each coordinate substrate. NAD(+) contacts are provided by residues asparagine 94 and 117 to 119 (VSN). Substrate is bound by residues asparagine 119 and arginine 150. Histidine 174 serves as the catalytic Proton acceptor.

It belongs to the LDH/MDH superfamily. MDH type 3 family.

It carries out the reaction (S)-malate + NAD(+) = oxaloacetate + NADH + H(+). Catalyzes the reversible oxidation of malate to oxaloacetate. The polypeptide is Malate dehydrogenase (Dehalococcoides mccartyi (strain CBDB1)).